The primary structure comprises 114 residues: MCFTVNGEMQLTPDTAAFLAMLFDFPFAFTKDLQPGGINHQMRDFTPGERFETDINRLCPPADTAVIRAAQRNIHQCKNGINKALRSAQGQPEYAFNDQHSRDGKVRIALRSAS.

In terms of biological role, may be associated with transposition functions of transposon Tn903. This is an uncharacterized protein from Escherichia coli.